Here is a 451-residue protein sequence, read N- to C-terminus: UDP-N-acetylmuramoylalanine--D-glutamate ligase (451 aa).

120-126 (GSNGKTT) contacts ATP.

It belongs to the MurCDEF family.

The protein resides in the cytoplasm. It carries out the reaction UDP-N-acetyl-alpha-D-muramoyl-L-alanine + D-glutamate + ATP = UDP-N-acetyl-alpha-D-muramoyl-L-alanyl-D-glutamate + ADP + phosphate + H(+). It functions in the pathway cell wall biogenesis; peptidoglycan biosynthesis. Cell wall formation. Catalyzes the addition of glutamate to the nucleotide precursor UDP-N-acetylmuramoyl-L-alanine (UMA). The protein is UDP-N-acetylmuramoylalanine--D-glutamate ligase of Bacillus pumilus (strain SAFR-032).